Here is an 85-residue protein sequence, read N- to C-terminus: Small ribosomal subunit protein uS17 (85 aa).

The protein belongs to the universal ribosomal protein uS17 family. Part of the 30S ribosomal subunit.

Its function is as follows. One of the primary rRNA binding proteins, it binds specifically to the 5'-end of 16S ribosomal RNA. This is Small ribosomal subunit protein uS17 from Desulfosudis oleivorans (strain DSM 6200 / JCM 39069 / Hxd3) (Desulfococcus oleovorans).